Reading from the N-terminus, the 552-residue chain is Dihydroxy-acid dehydratase (552 aa).

D78 contacts Mg(2+). C119 serves as a coordination point for [2Fe-2S] cluster. Mg(2+) is bound by residues D120 and K121. The residue at position 121 (K121) is an N6-carboxylysine. C190 contacts [2Fe-2S] cluster. Residue E441 coordinates Mg(2+). Residue S467 is the Proton acceptor of the active site.

The protein belongs to the IlvD/Edd family. In terms of assembly, homodimer. Requires [2Fe-2S] cluster as cofactor. Mg(2+) is required as a cofactor.

The enzyme catalyses (2R)-2,3-dihydroxy-3-methylbutanoate = 3-methyl-2-oxobutanoate + H2O. It catalyses the reaction (2R,3R)-2,3-dihydroxy-3-methylpentanoate = (S)-3-methyl-2-oxopentanoate + H2O. It participates in amino-acid biosynthesis; L-isoleucine biosynthesis; L-isoleucine from 2-oxobutanoate: step 3/4. The protein operates within amino-acid biosynthesis; L-valine biosynthesis; L-valine from pyruvate: step 3/4. Its function is as follows. Functions in the biosynthesis of branched-chain amino acids. Catalyzes the dehydration of (2R,3R)-2,3-dihydroxy-3-methylpentanoate (2,3-dihydroxy-3-methylvalerate) into 2-oxo-3-methylpentanoate (2-oxo-3-methylvalerate) and of (2R)-2,3-dihydroxy-3-methylbutanoate (2,3-dihydroxyisovalerate) into 2-oxo-3-methylbutanoate (2-oxoisovalerate), the penultimate precursor to L-isoleucine and L-valine, respectively. This is Dihydroxy-acid dehydratase from Ignicoccus hospitalis (strain KIN4/I / DSM 18386 / JCM 14125).